Consider the following 76-residue polypeptide: DNA-directed RNA polymerase subunit epsilon (76 aa).

The protein belongs to the RNA polymerase subunit epsilon family. In terms of assembly, RNAP is composed of a core of 2 alpha, a beta and a beta' subunit. The core is associated with a delta subunit, and at least one of epsilon or omega. When a sigma factor is associated with the core the holoenzyme is formed, which can initiate transcription.

It carries out the reaction RNA(n) + a ribonucleoside 5'-triphosphate = RNA(n+1) + diphosphate. A non-essential component of RNA polymerase (RNAP). This chain is DNA-directed RNA polymerase subunit epsilon, found in Streptococcus sanguinis (strain SK36).